Consider the following 118-residue polypeptide: Large ribosomal subunit protein bL20 (118 aa).

This sequence belongs to the bacterial ribosomal protein bL20 family.

Binds directly to 23S ribosomal RNA and is necessary for the in vitro assembly process of the 50S ribosomal subunit. It is not involved in the protein synthesizing functions of that subunit. This is Large ribosomal subunit protein bL20 from Edwardsiella ictaluri (strain 93-146).